Reading from the N-terminus, the 225-residue chain is ATP-dependent dethiobiotin synthetase BioD (225 aa).

Residue 15-20 coordinates ATP; it reads EIGKTF. Residue T19 participates in Mg(2+) binding. K40 is a catalytic residue. ATP-binding positions include D57, 118–121, 178–179, and 207–209; these read EGVG, NR, and PHV. Residues D57 and E118 each coordinate Mg(2+).

This sequence belongs to the dethiobiotin synthetase family. In terms of assembly, homodimer. Mg(2+) serves as cofactor.

It localises to the cytoplasm. It carries out the reaction (7R,8S)-7,8-diammoniononanoate + CO2 + ATP = (4R,5S)-dethiobiotin + ADP + phosphate + 3 H(+). It functions in the pathway cofactor biosynthesis; biotin biosynthesis; biotin from 7,8-diaminononanoate: step 1/2. Catalyzes a mechanistically unusual reaction, the ATP-dependent insertion of CO2 between the N7 and N8 nitrogen atoms of 7,8-diaminopelargonic acid (DAPA, also called 7,8-diammoniononanoate) to form a ureido ring. The sequence is that of ATP-dependent dethiobiotin synthetase BioD from Aromatoleum aromaticum (strain DSM 19018 / LMG 30748 / EbN1) (Azoarcus sp. (strain EbN1)).